We begin with the raw amino-acid sequence, 393 residues long: S-adenosylmethionine synthase 2 (393 aa).

Glu-9 is a Mg(2+) binding site. Residue His-15 coordinates ATP. Residue Glu-43 participates in K(+) binding. Residues Glu-56 and Gln-99 each contribute to the L-methionine site. ATP contacts are provided by residues 167-169, 235-238, Asp-246, 252-253, Ala-269, Lys-273, and Lys-277; these read DGK, SGRF, and RK. Asp-246 lines the L-methionine pocket. Lys-277 contributes to the L-methionine binding site.

It belongs to the AdoMet synthase family. In terms of assembly, homotetramer. Mn(2+) is required as a cofactor. It depends on Mg(2+) as a cofactor. The cofactor is Co(2+). K(+) serves as cofactor.

The protein localises to the cytoplasm. The catalysed reaction is L-methionine + ATP + H2O = S-adenosyl-L-methionine + phosphate + diphosphate. It participates in amino-acid biosynthesis; S-adenosyl-L-methionine biosynthesis; S-adenosyl-L-methionine from L-methionine: step 1/1. Its function is as follows. Catalyzes the formation of S-adenosylmethionine from methionine and ATP. The reaction comprises two steps that are both catalyzed by the same enzyme: formation of S-adenosylmethionine (AdoMet) and triphosphate, and subsequent hydrolysis of the triphosphate. The polypeptide is S-adenosylmethionine synthase 2 (METK2) (Vitis vinifera (Grape)).